Reading from the N-terminus, the 151-residue chain is Globin (151 aa).

The region spanning 2 to 151 (SLSDADKKAL…AAFNETLKKA (150 aa)) is the Globin domain. Heme b is bound at residue H100.

The protein belongs to the globin family.

The chain is Globin from Biomphalaria glabrata (Bloodfluke planorb).